A 952-amino-acid polypeptide reads, in one-letter code: Probable outer membrane protein pmp16 (952 aa).

A signal peptide spans 1 to 27 (MSKTPPKFLFYLGNFTACMFGMTPAVY). The Autotransporter domain maps to 646–952 (GDLATTPLWQ…HLQAGSTLKF (307 aa)).

It belongs to the PMP outer membrane protein family.

It localises to the secreted. It is found in the cell wall. Its subcellular location is the cell outer membrane. The chain is Probable outer membrane protein pmp16 (pmp16) from Chlamydia pneumoniae (Chlamydophila pneumoniae).